The following is a 254-amino-acid chain: Type III pantothenate kinase (254 aa).

6-13 lines the ATP pocket; sequence DVGNTNTT. Residues tyrosine 100 and 107–110 contribute to the substrate site; that span reads GADR. Residue aspartate 109 is the Proton acceptor of the active site. Aspartate 129 contacts K(+). Residue threonine 132 coordinates ATP. Position 184 (threonine 184) interacts with substrate.

It belongs to the type III pantothenate kinase family. In terms of assembly, homodimer. It depends on NH4(+) as a cofactor. Requires K(+) as cofactor.

It is found in the cytoplasm. It carries out the reaction (R)-pantothenate + ATP = (R)-4'-phosphopantothenate + ADP + H(+). It functions in the pathway cofactor biosynthesis; coenzyme A biosynthesis; CoA from (R)-pantothenate: step 1/5. Functionally, catalyzes the phosphorylation of pantothenate (Pan), the first step in CoA biosynthesis. In Anaeromyxobacter dehalogenans (strain 2CP-1 / ATCC BAA-258), this protein is Type III pantothenate kinase.